A 77-amino-acid polypeptide reads, in one-letter code: MIEQGRSSQDLKWLENYFKEGGNKMAETYINELKSKLDARKKEILSQLNEEYNKILKSRFEDLESVKRNILKEVQNI.

This sequence to E.hirae NtpH. As to quaternary structure, sul-ATPase is composed of six (or maybe five) subunits: alpha, beta, delta, gamma, C (proteolipid), and possibly epsilon.

It catalyses the reaction ATP + H2O + 4 H(+)(in) = ADP + phosphate + 5 H(+)(out). The protein is Membrane-associated ATPase epsilon chain (atpE) of Sulfolobus acidocaldarius (strain ATCC 33909 / DSM 639 / JCM 8929 / NBRC 15157 / NCIMB 11770).